Consider the following 190-residue polypeptide: Putative glutathione-dependent formaldehyde-activating enzyme (190 aa).

The region spanning 19–165 is the CENP-V/GFA domain; it reads FKGGKLYCHC…FRKVGLQPYD (147 aa). Zn(2+)-binding residues include cysteine 26, cysteine 28, cysteine 47, cysteine 49, cysteine 52, cysteine 94, and cysteine 97.

Belongs to the Gfa family. It depends on Zn(2+) as a cofactor.

It carries out the reaction S-(hydroxymethyl)glutathione = glutathione + formaldehyde. The protein operates within one-carbon metabolism; formaldehyde degradation; formate from formaldehyde (glutathione route): step 1/3. In terms of biological role, catalyzes the condensation of formaldehyde and glutathione to S-hydroxymethylglutathione. The sequence is that of Putative glutathione-dependent formaldehyde-activating enzyme from Pyrenophora teres f. teres (strain 0-1) (Barley net blotch fungus).